We begin with the raw amino-acid sequence, 354 residues long: uncharacterized protein (354 aa).

Residues 1–21 (MRYLLIVITFFMGFSSLPAWA) form the signal peptide.

This sequence to E.coli YbgO.

In terms of biological role, may be involved in a fimbrial system chaperoned by YqiH and exported by YqiG. This is an uncharacterized protein from Escherichia coli (strain K12).